Consider the following 239-residue polypeptide: Large ribosomal subunit protein uL2 (239 aa).

Belongs to the universal ribosomal protein uL2 family.

The protein resides in the cytoplasm. In Encephalitozoon cuniculi (strain GB-M1) (Microsporidian parasite), this protein is Large ribosomal subunit protein uL2 (RPL8).